The sequence spans 348 residues: Holliday junction branch migration complex subunit RuvB (348 aa).

The interval 1–183 is large ATPase domain (RuvB-L); it reads MTDPSRLVTP…FGIPVRLNFY (183 aa). ATP contacts are provided by residues Leu22, Arg23, Gly64, Lys67, Thr68, Thr69, 130 to 132, Arg173, Tyr183, and Arg220; that span reads EDF. A Mg(2+)-binding site is contributed by Thr68. The interval 184-254 is small ATPAse domain (RuvB-S); sequence TIEELESIVS…IADHALGALE (71 aa). The interval 257–348 is head domain (RuvB-H); sequence AAGLDAMDRR…FGLFGGEEEA (92 aa). DNA contacts are provided by Arg293, Arg312, and Arg317.

The protein belongs to the RuvB family. In terms of assembly, homohexamer. Forms an RuvA(8)-RuvB(12)-Holliday junction (HJ) complex. HJ DNA is sandwiched between 2 RuvA tetramers; dsDNA enters through RuvA and exits via RuvB. An RuvB hexamer assembles on each DNA strand where it exits the tetramer. Each RuvB hexamer is contacted by two RuvA subunits (via domain III) on 2 adjacent RuvB subunits; this complex drives branch migration. In the full resolvosome a probable DNA-RuvA(4)-RuvB(12)-RuvC(2) complex forms which resolves the HJ.

The protein resides in the cytoplasm. It catalyses the reaction ATP + H2O = ADP + phosphate + H(+). Its function is as follows. The RuvA-RuvB-RuvC complex processes Holliday junction (HJ) DNA during genetic recombination and DNA repair, while the RuvA-RuvB complex plays an important role in the rescue of blocked DNA replication forks via replication fork reversal (RFR). RuvA specifically binds to HJ cruciform DNA, conferring on it an open structure. The RuvB hexamer acts as an ATP-dependent pump, pulling dsDNA into and through the RuvAB complex. RuvB forms 2 homohexamers on either side of HJ DNA bound by 1 or 2 RuvA tetramers; 4 subunits per hexamer contact DNA at a time. Coordinated motions by a converter formed by DNA-disengaged RuvB subunits stimulates ATP hydrolysis and nucleotide exchange. Immobilization of the converter enables RuvB to convert the ATP-contained energy into a lever motion, pulling 2 nucleotides of DNA out of the RuvA tetramer per ATP hydrolyzed, thus driving DNA branch migration. The RuvB motors rotate together with the DNA substrate, which together with the progressing nucleotide cycle form the mechanistic basis for DNA recombination by continuous HJ branch migration. Branch migration allows RuvC to scan DNA until it finds its consensus sequence, where it cleaves and resolves cruciform DNA. This Rhodopseudomonas palustris (strain HaA2) protein is Holliday junction branch migration complex subunit RuvB.